The sequence spans 434 residues: 3-phosphoshikimate 1-carboxyvinyltransferase (434 aa).

Positions 15, 16, and 20 each coordinate 3-phosphoshikimate. Lys15 serves as a coordination point for phosphoenolpyruvate. 2 residues coordinate phosphoenolpyruvate: Gly96 and Arg124. Residues Ser169, Gln171, Ser195, Asp319, and Lys346 each contribute to the 3-phosphoshikimate site. Residue Gln171 participates in phosphoenolpyruvate binding. Asp319 (proton acceptor) is an active-site residue. 2 residues coordinate phosphoenolpyruvate: Arg350 and Arg394.

Belongs to the EPSP synthase family. As to quaternary structure, monomer.

The protein localises to the cytoplasm. It carries out the reaction 3-phosphoshikimate + phosphoenolpyruvate = 5-O-(1-carboxyvinyl)-3-phosphoshikimate + phosphate. It participates in metabolic intermediate biosynthesis; chorismate biosynthesis; chorismate from D-erythrose 4-phosphate and phosphoenolpyruvate: step 6/7. Functionally, catalyzes the transfer of the enolpyruvyl moiety of phosphoenolpyruvate (PEP) to the 5-hydroxyl of shikimate-3-phosphate (S3P) to produce enolpyruvyl shikimate-3-phosphate and inorganic phosphate. The polypeptide is 3-phosphoshikimate 1-carboxyvinyltransferase (Chlorobaculum tepidum (strain ATCC 49652 / DSM 12025 / NBRC 103806 / TLS) (Chlorobium tepidum)).